The chain runs to 122 residues: MNAVTESAATTEMPAPFVFTDAAADKVKQLIDEEGNPDLKLRVFVQGGGCSGFQYGFTFDEEVNEDDTVLNKNGVVLLVDAMSYQYLVGAEIDYKDDLNGAQFVIKNPNATTTCGCGSSFSV.

Iron-sulfur cluster contacts are provided by C50, C114, and C116.

Belongs to the HesB/IscA family. As to quaternary structure, homodimer. The cofactor is iron-sulfur cluster.

Functionally, required for insertion of 4Fe-4S clusters. The polypeptide is Putative iron-sulfur cluster insertion protein ErpA (Burkholderia mallei (strain NCTC 10247)).